A 657-amino-acid polypeptide reads, in one-letter code: Glycogen debranching enzyme (657 aa).

The active-site Nucleophile is the D336. E371 acts as the Proton donor in catalysis. The segment covering 458-467 (NEANGEENRD) has biased composition (basic and acidic residues). Residues 458–479 (NEANGEENRDGTNNNYSNNHGK) form a disordered region.

It belongs to the glycosyl hydrolase 13 family.

The enzyme catalyses Hydrolysis of (1-&gt;6)-alpha-D-glucosidic linkages to branches with degrees of polymerization of three or four glucose residues in limit dextrin.. It participates in glycan degradation; glycogen degradation. Its function is as follows. Removes maltotriose and maltotetraose chains that are attached by 1,6-alpha-linkage to the limit dextrin main chain, generating a debranched limit dextrin. The polypeptide is Glycogen debranching enzyme (Escherichia coli O8 (strain IAI1)).